The primary structure comprises 875 residues: MLSNTLRSNFLKFYANRNHTPVASSPVFPHNDPSILFTNAGMNQFKNIFLGKEQTSYTRATTSQKCIRAGGKHNDLENVGHTSRHLTFFEMLGNFSFGDYFKQDAISFAWEVSLSVFNFDPDFIYATVHEKDDEAFALWEKYLPTDRIFRLTDKDNFWSMADTGPCGFCSELLFDRGEKFGKAASPLEDVDGERFLEYWNLVFMEFNRTSDGTLLALQKKCVDTGAGLERLVSLLAETKTVFEADVLRHLISKIENLSGTTYSPTEAKGAAFRVIADHIRSLSFAIADGLLPGNTERGYVLRKILRRAVNYGKRLGFNRPFLADVVPSLVDVMGEAYPELSASVTQIQEVLTTEEEHFFKTLQRGGNLLQQVLKSSASSAKISGEDAFKLKDTYGLPIDEIALLAKDYNYAIDMDTFEKLEVEAKERSRKNTKKTKNDSDSVFQDLDPTNTSEFIGYDTLSCDTFIEGIIKYNEIASSLEEGDEGAIILRTTPFYAEKGGQIGDSGEIFCESGTFLVSHTIAPKAGLIVHLGKLSQGSLTTTMAVTAQVNQNLRKKTANNHTGCHLLHKALEMTLGEHIRQAGSYVDSQKIRLDFTHNKALSPEDLLAIETLVNEKIRENDPVTIREVLYSDVMSSSEIKQFCGDKYGDIVRVVLAGFSHELCGGTHAQATGDIGYFRITKEHAVATGIRRIEATTGEDAENIARGQDVDLNEIATVIQSPKDQILVKIRSVMEEKKDLAKQVADLENQLVQQQVKTLLTSCEKICDTSYLVYYLTEEEGQRIQHYANAIHKEIPTNFISLWITEKNGRYIVLSRVSDDLTKRGVQAHTLLAELLAPYGGRCGGKAISAQGSSAELPQIEFLNKTLRQWISTQLA.

Zn(2+) is bound by residues H561, H565, C663, and H667.

The protein belongs to the class-II aminoacyl-tRNA synthetase family. Zn(2+) serves as cofactor.

Its subcellular location is the cytoplasm. It catalyses the reaction tRNA(Ala) + L-alanine + ATP = L-alanyl-tRNA(Ala) + AMP + diphosphate. In terms of biological role, catalyzes the attachment of alanine to tRNA(Ala) in a two-step reaction: alanine is first activated by ATP to form Ala-AMP and then transferred to the acceptor end of tRNA(Ala). Also edits incorrectly charged Ser-tRNA(Ala) and Gly-tRNA(Ala) via its editing domain. The chain is Alanine--tRNA ligase from Chlamydia trachomatis serovar L2 (strain ATCC VR-902B / DSM 19102 / 434/Bu).